A 453-amino-acid polypeptide reads, in one-letter code: tRNA modification GTPase MnmE (453 aa).

(6S)-5-formyl-5,6,7,8-tetrahydrofolate-binding residues include R28, E90, and R129. The TrmE-type G domain maps to 224–375; it reads GLRVAIIGRP…LSSALLKLCG (152 aa). K(+) is bound at residue N234. GTP is bound by residues 234 to 239, 253 to 259, 278 to 281, and 356 to 358; these read NVGKSS, TDLPGTT, DTAG, and SAR. S238 serves as a coordination point for Mg(2+). K(+) contacts are provided by T253, L255, and T258. Residue T259 participates in Mg(2+) binding. K453 is a (6S)-5-formyl-5,6,7,8-tetrahydrofolate binding site.

This sequence belongs to the TRAFAC class TrmE-Era-EngA-EngB-Septin-like GTPase superfamily. TrmE GTPase family. In terms of assembly, homodimer. Heterotetramer of two MnmE and two MnmG subunits. K(+) serves as cofactor.

It is found in the cytoplasm. Functionally, exhibits a very high intrinsic GTPase hydrolysis rate. Involved in the addition of a carboxymethylaminomethyl (cmnm) group at the wobble position (U34) of certain tRNAs, forming tRNA-cmnm(5)s(2)U34. This Synechococcus sp. (strain RCC307) protein is tRNA modification GTPase MnmE.